Consider the following 451-residue polypeptide: Phosphoglucosamine mutase (451 aa).

Serine 107 (phosphoserine intermediate) is an active-site residue. 4 residues coordinate Mg(2+): serine 107, aspartate 246, aspartate 248, and aspartate 250. Serine 107 carries the post-translational modification Phosphoserine.

Belongs to the phosphohexose mutase family. Mg(2+) is required as a cofactor. Activated by phosphorylation.

The enzyme catalyses alpha-D-glucosamine 1-phosphate = D-glucosamine 6-phosphate. Functionally, catalyzes the conversion of glucosamine-6-phosphate to glucosamine-1-phosphate. This is Phosphoglucosamine mutase from Burkholderia cenocepacia (strain ATCC BAA-245 / DSM 16553 / LMG 16656 / NCTC 13227 / J2315 / CF5610) (Burkholderia cepacia (strain J2315)).